Consider the following 103-residue polypeptide: Small ribosomal subunit protein uS10 (103 aa).

This sequence belongs to the universal ribosomal protein uS10 family. In terms of assembly, part of the 30S ribosomal subunit.

Its function is as follows. Involved in the binding of tRNA to the ribosomes. This chain is Small ribosomal subunit protein uS10, found in Persephonella marina (strain DSM 14350 / EX-H1).